We begin with the raw amino-acid sequence, 557 residues long: Formate--tetrahydrofolate ligase (557 aa).

66–73 (TPAGEGKS) serves as a coordination point for ATP.

Belongs to the formate--tetrahydrofolate ligase family.

It carries out the reaction (6S)-5,6,7,8-tetrahydrofolate + formate + ATP = (6R)-10-formyltetrahydrofolate + ADP + phosphate. Its pathway is one-carbon metabolism; tetrahydrofolate interconversion. This Clostridium botulinum (strain ATCC 19397 / Type A) protein is Formate--tetrahydrofolate ligase.